An 829-amino-acid chain; its full sequence is Periplasmic nitrate reductase (829 aa).

The tat-type signal signal peptide spans 1-36 (MARRDFIKQTAAAAAATVAGVPLTGYTQNIVTESEA). The 57-residue stretch at 39-95 (LKWSKAPCRFCGTGCGVNVAVKDNQVVATHGDFNAEVNKGLNCVKGYFLSKIMYGSD) folds into the 4Fe-4S Mo/W bis-MGD-type domain. [4Fe-4S] cluster-binding residues include cysteine 46, cysteine 49, cysteine 53, and cysteine 81. Residues lysine 83, glutamine 150, asparagine 175, cysteine 179, 212–219 (WGSNMAEM), 243–247 (STFEH), 262–264 (QSD), methionine 373, glutamine 377, asparagine 483, 509–510 (SD), lysine 532, aspartate 559, and 719–728 (TGRVLEHWHS) each bind Mo-bis(molybdopterin guanine dinucleotide). Tryptophan 795 serves as a coordination point for substrate. Mo-bis(molybdopterin guanine dinucleotide) contacts are provided by asparagine 803 and lysine 820.

This sequence belongs to the prokaryotic molybdopterin-containing oxidoreductase family. NasA/NapA/NarB subfamily. As to quaternary structure, component of the periplasmic nitrate reductase NapAB complex composed of NapA and NapB. [4Fe-4S] cluster is required as a cofactor. It depends on Mo-bis(molybdopterin guanine dinucleotide) as a cofactor. In terms of processing, predicted to be exported by the Tat system. The position of the signal peptide cleavage has not been experimentally proven.

It localises to the periplasm. The catalysed reaction is 2 Fe(II)-[cytochrome] + nitrate + 2 H(+) = 2 Fe(III)-[cytochrome] + nitrite + H2O. Functionally, catalytic subunit of the periplasmic nitrate reductase complex NapAB. Receives electrons from NapB and catalyzes the reduction of nitrate to nitrite. The chain is Periplasmic nitrate reductase from Bordetella bronchiseptica (strain ATCC BAA-588 / NCTC 13252 / RB50) (Alcaligenes bronchisepticus).